The chain runs to 1099 residues: Adenylate-forming reductase Nps11 (1099 aa).

The segment at alanine 29–methionine 360 is adenylation (A) domain. AMP is bound by residues histidine 244, asparagine 347–valine 348, threonine 352, and leucine 432–arginine 435. One can recognise a Carrier domain in the interval tryptophan 578 to valine 664. Serine 613 carries the post-translational modification O-(pantetheine 4'-phosphoryl)serine. Positions leucine 717–valine 952 are reductase (R) domain. NADP(+) is bound by residues threonine 721–leucine 724, asparagine 809–tryptophan 811, tyrosine 883, and lysine 887.

Belongs to the adenylate-forming reductase family.

Its function is as follows. Adenylate-forming reductase, a natural product biosynthesis enzyme that resembles non-ribosomal peptide synthetases, yet serves to modify one substrate, rather than to condense two or more building blocks. The A-domain preferentially accepts benzoic acid as substrate. The natural product of the enzyme is not yet known. The protein is Adenylate-forming reductase Nps11 of Serpula lacrymans var. lacrymans (strain S7.9) (Dry rot fungus).